The primary structure comprises 114 residues: uncharacterized protein (114 aa).

The segment at 1–114 (MSTAASSRMR…HASQSPDTAY (114 aa)) is disordered. Residues 32 to 43 (CRRVPSRPCRPV) are compositionally biased toward low complexity.

This is an uncharacterized protein from Human adenovirus B serotype 7 (HAdV-7).